The chain runs to 216 residues: Phosphorylated carbohydrates phosphatase TM_1254 (216 aa).

Asp7 acts as the Nucleophile in catalysis.

This sequence belongs to the HAD-like hydrolase superfamily. Requires Co(2+) as cofactor. It depends on Mg(2+) as a cofactor. The cofactor is Mn(2+). Ni(2+) serves as cofactor.

Displays high phosphatase activity toward erythrose 4-phosphate, fructose 6-phosphate, 2-deoxyglucose 6-phosphate, and mannose 6-phosphate. May have a role in the intracellular metabolism of many phosphorylated carbohydrates. The polypeptide is Phosphorylated carbohydrates phosphatase TM_1254 (Thermotoga maritima (strain ATCC 43589 / DSM 3109 / JCM 10099 / NBRC 100826 / MSB8)).